Reading from the N-terminus, the 192-residue chain is Hydrogenase expression/formation protein HupD (192 aa).

Ni(2+)-binding residues include E23, D69, and H100.

Belongs to the peptidase A31 family.

Functionally, not known. Could be involved in the processing of hydrogenase. This Bradyrhizobium diazoefficiens (strain JCM 10833 / BCRC 13528 / IAM 13628 / NBRC 14792 / USDA 110) protein is Hydrogenase expression/formation protein HupD (hupD).